Reading from the N-terminus, the 193-residue chain is Pilin-like protein PilA2 (193 aa).

Positions 1–4 (MRKG) are cleaved as a propeptide — leader sequence. N-methylleucine is present on Leu5. The chain crosses the membrane as a helical span at residues 5–25 (LTLVEVLVTLVIMGIAFAALL).

The protein resides in the cell inner membrane. The protein localises to the cell outer membrane. It is found in the periplasm. Plays an essential role in natural DNA transformation but is not required for pilus biogenesis. In Thermus thermophilus (strain ATCC BAA-163 / DSM 7039 / HB27), this protein is Pilin-like protein PilA2 (pilA2).